The following is a 441-amino-acid chain: Nucleolar and spindle-associated protein 1 (441 aa).

Disordered stretches follow at residues 47–186 and 216–267; these read ARKG…PNFK and MNEL…LGLK. Polar residues-rich tracts occupy residues 56–74 and 100–116; these read ESQT…ISNQ and DSQQ…PTEF. Residues 117-126 are compositionally biased toward basic and acidic residues; the sequence is QNHEKQESQD. Phosphoserine; by ATM is present on Ser124. Ser135 carries the post-translational modification Phosphoserine. Residues 152 to 171 are compositionally biased toward basic and acidic residues; it reads RDSKVPSEGKKSLYTDESSK. Thr182 is subject to Phosphothreonine. The segment at 237 to 382 is interaction with microtubules; that stretch reads GRLSVASTPI…HKGKLKPWGQ (146 aa). Residue Ser240 is modified to Phosphoserine. Polar residues predominate over residues 241–264; the sequence is VASTPISQRRSQGRSCGPASQSTL. Thr244 is modified (phosphothreonine). A phosphoserine mark is found at Ser247, Ser255, Ser269, Ser276, and Ser311. The segment at 286-319 is disordered; sequence AATKDNEHKRSLTKTPARKSAHVTVSGGTPKGEA. A phosphothreonine mark is found at Thr314, Thr338, and Thr349. Residues Ser352 and Ser363 each carry the phosphoserine modification. Residues 384–390 carry the KEN box motif; that stretch reads KENNYLN. The segment at 401-427 is disordered; the sequence is KTYKQPHLQTKEEQRKKREQERKEKKA. Residues 407–432 are a coiled coil; that stretch reads HLQTKEEQRKKREQERKEKKAKVLGM. Residues 409 to 424 show a composition bias toward basic and acidic residues; sequence QTKEEQRKKREQERKE. Lys411 bears the N6-acetyllysine mark.

Belongs to the NUSAP family. Interacts with DNA and microtubules. Microtubule bundling is inhibited by IPO7, KPNA2 and KPNB1 while association with DNA is also inhibited by IPO7 and KPNA2. Post-translationally, ubiquitinated. Ubiquitination by FZR1 may lead to proteasome-dependent degradation of this protein. In terms of processing, phosphorylation by ATM in G2/M-phase induces mitotic arrest.

It localises to the cytoplasm. Its subcellular location is the nucleus. The protein resides in the nucleolus. It is found in the cytoskeleton. The protein localises to the spindle. It localises to the chromosome. Its function is as follows. Microtubule-associated protein with the capacity to bundle and stabilize microtubules. May associate with chromosomes and promote the organization of mitotic spindle microtubules around them. In Homo sapiens (Human), this protein is Nucleolar and spindle-associated protein 1 (NUSAP1).